Consider the following 314-residue polypeptide: Acetaldehyde dehydrogenase 1 (314 aa).

16-19 serves as a coordination point for NAD(+); that stretch reads SGNI. Cysteine 134 (acyl-thioester intermediate) is an active-site residue. Residues 165–173 and asparagine 292 contribute to the NAD(+) site; that span reads SAGPGTRAN.

The protein belongs to the acetaldehyde dehydrogenase family.

It catalyses the reaction acetaldehyde + NAD(+) + CoA = acetyl-CoA + NADH + H(+). The chain is Acetaldehyde dehydrogenase 1 (mhpF) from Cupriavidus necator (strain ATCC 17699 / DSM 428 / KCTC 22496 / NCIMB 10442 / H16 / Stanier 337) (Ralstonia eutropha).